The primary structure comprises 610 residues: Aspercryptin biosynthesis cluster-specific transcription regulator atnN (610 aa).

Residues 1–26 (MAPKDSQVSASNEMTGNPPSSVQGRS) show a composition bias toward polar residues. Positions 1 to 27 (MAPKDSQVSASNEMTGNPPSSVQGRSR) are disordered. The segment at residues 30-57 (CITCRIRRVKCDEERPHCRRCQSTGRKC) is a DNA-binding region (zn(2)-C6 fungal-type). 2 disordered regions span residues 61–81 (TPLTGQQPKQQPPQQAAKAGS) and 427–493 (AGST…LPRP). Low complexity-rich tracts occupy residues 66 to 79 (QQPKQQPPQQAAKA) and 437 to 474 (SRAGSPSGSRSRSMSTSSSASRDDSPTTTTTTTTTPTP).

It localises to the nucleus. Transcription factor that positively regulates the cluster that mediate the production of aspercryptins, linear lipopeptides built from six amino acids including 2 highly unusual and nonproteogenic amino acids, 2-amino-octanoic acid (2aoa) and 2-amino-dodecanol (2adol). In Emericella nidulans (strain FGSC A4 / ATCC 38163 / CBS 112.46 / NRRL 194 / M139) (Aspergillus nidulans), this protein is Aspercryptin biosynthesis cluster-specific transcription regulator atnN.